Reading from the N-terminus, the 90-residue chain is Probable Fe(2+)-trafficking protein (90 aa).

It belongs to the Fe(2+)-trafficking protein family.

Functionally, could be a mediator in iron transactions between iron acquisition and iron-requiring processes, such as synthesis and/or repair of Fe-S clusters in biosynthetic enzymes. The chain is Probable Fe(2+)-trafficking protein from Paracidovorax citrulli (strain AAC00-1) (Acidovorax citrulli).